Here is a 509-residue protein sequence, read N- to C-terminus: MFLNAEFFFFFFQISISYIRLSQVSMFVRRLHKFSYNPNYKFKCGLEIHTQLKTKYKLFSLSPTSYNEPPNTKLSYFDVGLPGTQPLLNPEALLLALKASVALNCEIQSHSSFDRKHYFYADQPLGYQITQHYYPLAKNGYVQLNKFDDVPDKVITLEQVQLEQDTGKTVNYDDRINVDLNRANTPLIEVVTKPDFENIDQVQAFVRKYQLLVRHLDICTGDLETGAIRVDANISVNDNPRVEIKNLGSSGEIVDALKYEYNRQVTLLQNNETIVQETRGWNGTGTESLRKKENAVDYRYVPDSELPVIRLDSHIQEQLENTLDELPDSVLDRLTKEPYNLQLAHARNLLFQPEVLNYYENIFGRIRDANKWFFHELLAAFAKSDVQFQVDIVSTNMLVDIVSAVEKNEISLTGARIILKHIIRNKSFSTLPHLIKELDIGKPEASAELDDTINEICQQIINTNADVVEKIARGHANALQVLIGQAMKATKGKVHAKEFRSKFMELLNQ.

The protein belongs to the GatB/GatE family. GatB subfamily. In terms of assembly, subunit of the heterotrimeric GatFAB amidotransferase (AdT) complex, composed of A, B and F subunits.

It is found in the mitochondrion. The enzyme catalyses L-glutamyl-tRNA(Gln) + L-glutamine + ATP + H2O = L-glutaminyl-tRNA(Gln) + L-glutamate + ADP + phosphate + H(+). Functionally, allows the formation of correctly charged Gln-tRNA(Gln) through the transamidation of misacylated Glu-tRNA(Gln) in the mitochondria. The reaction takes place in the presence of glutamine and ATP through an activated gamma-phospho-Glu-tRNA(Gln). The sequence is that of Glutamyl-tRNA(Gln) amidotransferase subunit B, mitochondrial from Candida dubliniensis (strain CD36 / ATCC MYA-646 / CBS 7987 / NCPF 3949 / NRRL Y-17841) (Yeast).